Reading from the N-terminus, the 256-residue chain is MSTHLSVNVNKIAVLRNSRGGQDPDVVQAARSCIAAGAHGITVHPRPDQRHIRADDVYALSTLTRMHGVEFNIEGNPFAPPRAGYPGLLELCRATRPQQVTLVPDGDGQLTSDHGVDFARDGARLAPLIAAFKTLGCRVSLFVDAGNPEIAQAAALGADRIELYTGPYAEAHHHGQSQPSLALFADAARRAHAAGLGINAGHDLSQHNLADFLAGVPDVLEVSIGHALVGEALYQGLEPTVRAYLAIIAGGATTAA.

Residues N8 and R19 each contribute to the 3-amino-2-oxopropyl phosphate site. Catalysis depends on H44, which acts as the Proton acceptor. The 1-deoxy-D-xylulose 5-phosphate site is built by R46 and H51. Residue E74 is the Proton acceptor of the active site. Residue T111 participates in 1-deoxy-D-xylulose 5-phosphate binding. H202 serves as the catalytic Proton donor. 3-amino-2-oxopropyl phosphate-binding positions include D203 and G225–H226.

Belongs to the PNP synthase family. As to quaternary structure, homooctamer; tetramer of dimers.

It localises to the cytoplasm. The enzyme catalyses 3-amino-2-oxopropyl phosphate + 1-deoxy-D-xylulose 5-phosphate = pyridoxine 5'-phosphate + phosphate + 2 H2O + H(+). It participates in cofactor biosynthesis; pyridoxine 5'-phosphate biosynthesis; pyridoxine 5'-phosphate from D-erythrose 4-phosphate: step 5/5. Functionally, catalyzes the complicated ring closure reaction between the two acyclic compounds 1-deoxy-D-xylulose-5-phosphate (DXP) and 3-amino-2-oxopropyl phosphate (1-amino-acetone-3-phosphate or AAP) to form pyridoxine 5'-phosphate (PNP) and inorganic phosphate. The chain is Pyridoxine 5'-phosphate synthase from Xanthomonas campestris pv. campestris (strain 8004).